The following is a 474-amino-acid chain: Glutamyl-tRNA(Gln) amidotransferase subunit A (474 aa).

Active-site charge relay system residues include Lys76 and Ser151. Ser175 functions as the Acyl-ester intermediate in the catalytic mechanism.

Belongs to the amidase family. GatA subfamily. Heterotrimer of A, B and C subunits.

The catalysed reaction is L-glutamyl-tRNA(Gln) + L-glutamine + ATP + H2O = L-glutaminyl-tRNA(Gln) + L-glutamate + ADP + phosphate + H(+). Functionally, allows the formation of correctly charged Gln-tRNA(Gln) through the transamidation of misacylated Glu-tRNA(Gln) in organisms which lack glutaminyl-tRNA synthetase. The reaction takes place in the presence of glutamine and ATP through an activated gamma-phospho-Glu-tRNA(Gln). The polypeptide is Glutamyl-tRNA(Gln) amidotransferase subunit A (Chlorobium limicola (strain DSM 245 / NBRC 103803 / 6330)).